The sequence spans 294 residues: NAD kinase (294 aa).

The Proton acceptor role is filled by Asp74. NAD(+) contacts are provided by residues 74–75 (DG), Arg79, 149–150 (NE), Asp179, 190–195 (TGYSMS), and Ala214.

The protein belongs to the NAD kinase family. A divalent metal cation is required as a cofactor.

It localises to the cytoplasm. It catalyses the reaction NAD(+) + ATP = ADP + NADP(+) + H(+). In terms of biological role, involved in the regulation of the intracellular balance of NAD and NADP, and is a key enzyme in the biosynthesis of NADP. Catalyzes specifically the phosphorylation on 2'-hydroxyl of the adenosine moiety of NAD to yield NADP. This Flavobacterium psychrophilum (strain ATCC 49511 / DSM 21280 / CIP 103535 / JIP02/86) protein is NAD kinase.